Reading from the N-terminus, the 590-residue chain is Protein ecdysoneless homolog (590 aa).

The tract at residues Glu445–Asp464 is disordered. Residues Thr455 to Asp464 are compositionally biased toward acidic residues.

This sequence belongs to the ECD family.

The protein resides in the cytoplasm. The protein localises to the nucleus. Functionally, involved in the regulation of carbohydrate metabolism. May act as a transcription factor. The polypeptide is Protein ecdysoneless homolog (Schizosaccharomyces pombe (strain 972 / ATCC 24843) (Fission yeast)).